The primary structure comprises 324 residues: NADH-cytochrome b5 reductase 2 (324 aa).

A helical membrane pass occupies residues 31-47 (IPLIGGITLAAGAGYYY). The region spanning 70–178 (QGWIGLKLAH…KGPLPKYPWE (109 aa)) is the FAD-binding FR-type domain. 181–216 (KHDHICLIAGGTGITPMYQLVRKIFSNPEDKTKVTL) provides a ligand contact to FAD.

This sequence belongs to the flavoprotein pyridine nucleotide cytochrome reductase family. FAD serves as cofactor.

The protein localises to the mitochondrion outer membrane. It catalyses the reaction 2 Fe(III)-[cytochrome b5] + NADH = 2 Fe(II)-[cytochrome b5] + NAD(+) + H(+). In terms of biological role, may mediate the reduction of outer membrane cytochrome b5. The sequence is that of NADH-cytochrome b5 reductase 2 (MCR1) from Ajellomyces capsulatus (strain NAm1 / WU24) (Darling's disease fungus).